Reading from the N-terminus, the 456-residue chain is tRNA modification GTPase MnmE (456 aa).

Positions 24, 81, and 120 each coordinate (6S)-5-formyl-5,6,7,8-tetrahydrofolate. The TrmE-type G domain occupies 216 to 379 (GMTVVIAGRP…LRDHLKACMG (164 aa)). N226 contacts K(+). Residues 226–231 (NAGKSS), 245–251 (TDIAGTT), 270–273 (DTAG), and 335–338 (NKAD) each bind GTP. A Mg(2+)-binding site is contributed by S230. Residues T245, I247, and T250 each contribute to the K(+) site. Position 251 (T251) interacts with Mg(2+). K456 serves as a coordination point for (6S)-5-formyl-5,6,7,8-tetrahydrofolate.

The protein belongs to the TRAFAC class TrmE-Era-EngA-EngB-Septin-like GTPase superfamily. TrmE GTPase family. As to quaternary structure, homodimer. Heterotetramer of two MnmE and two MnmG subunits. K(+) serves as cofactor.

The protein localises to the cytoplasm. Exhibits a very high intrinsic GTPase hydrolysis rate. Involved in the addition of a carboxymethylaminomethyl (cmnm) group at the wobble position (U34) of certain tRNAs, forming tRNA-cmnm(5)s(2)U34. The polypeptide is tRNA modification GTPase MnmE (Pseudomonas putida (strain GB-1)).